The following is a 455-amino-acid chain: GTPase Der (455 aa).

2 consecutive EngA-type G domains span residues proline 4–aspartate 169 and isoleucine 178–arginine 353. Residues glycine 10–serine 17, aspartate 57–leucine 61, asparagine 120–glutamate 123, glycine 184–serine 191, aspartate 231–isoleucine 235, and asparagine 296–aspartate 299 contribute to the GTP site. The region spanning arginine 354–glutamine 439 is the KH-like domain.

It belongs to the TRAFAC class TrmE-Era-EngA-EngB-Septin-like GTPase superfamily. EngA (Der) GTPase family. Associates with the 50S ribosomal subunit.

In terms of biological role, GTPase that plays an essential role in the late steps of ribosome biogenesis. In Synechococcus sp. (strain CC9311), this protein is GTPase Der.